The following is a 314-amino-acid chain: N-alpha-acetyltransferase 80 (314 aa).

Residues 90-243 enclose the N-acetyltransferase domain; it reads LEPVHCRPEL…TTVLRAFSKP (154 aa). Substrate is bound by residues R113 and 118 to 121; that span reads RLHS. Residues 169–171, 177–182, and Q207 each bind acetyl-CoA; these read VVV and GRGFGR. A disordered region spans residues 260–295; the sequence is VPRSSKGPPLPPPPPLPQSLTASPPPSPEPLPQSPL. Pro residues predominate over residues 267–292; that stretch reads PPLPPPPPLPQSLTASPPPSPEPLPQ.

This sequence belongs to the acetyltransferase family.

The protein localises to the cytoplasm. It is found in the cytosol. The catalysed reaction is N-terminal L-aspartyl-L-aspartyl-L-aspartyl-[protein] + acetyl-CoA = N-terminal N-acetyl-L-aspartyl-L-aspartyl-L-aspartyl-[protein] + CoA + H(+). It carries out the reaction N-terminal L-glutamyl-L-glutamyl-L-glutamyl-[protein] + acetyl-CoA = N-terminal N-acetyl-L-glutamyl-L-glutamyl-L-glutamyl-[protein] + CoA + H(+). Functionally, N-alpha-acetyltransferase that specifically mediates the acetylation of the acidic amino terminus of processed forms of beta- and gamma-actin (ACTB and ACTG, respectively). N-terminal acetylation of processed beta- and gamma-actin regulates actin filament depolymerization and elongation. In vivo, preferentially displays N-terminal acetyltransferase activity towards acid N-terminal sequences starting with Asp-Asp-Asp and Glu-Glu-Glu. In vitro, shows high activity towards Met-Asp-Glu-Leu and Met-Asp-Asp-Asp. May act as a tumor suppressor. This Mus musculus (Mouse) protein is N-alpha-acetyltransferase 80.